A 281-amino-acid polypeptide reads, in one-letter code: Ribosomal RNA large subunit methyltransferase J (281 aa).

Residues H19, H42, S101, E119, 144-145 (NG), and D165 contribute to the S-adenosyl-L-methionine site. The active-site Proton acceptor is D165.

The protein belongs to the RlmJ family. Monomer.

It carries out the reaction adenosine(2030) in 23S rRNA + S-adenosyl-L-methionine = N(6)-methyladenosine(2030) in 23S rRNA + S-adenosyl-L-homocysteine + H(+). In terms of biological role, specifically methylates the adenine in position 2030 of 23S rRNA. The protein is Ribosomal RNA large subunit methyltransferase J of Haemophilus influenzae (strain ATCC 51907 / DSM 11121 / KW20 / Rd).